Here is a 393-residue protein sequence, read N- to C-terminus: Sugar efflux transporter B (393 aa).

12 helical membrane-spanning segments follow: residues 13–33 (FDLT…AGAL), 52–72 (MVGF…QFLA), 84–101 (LIVF…LFAW), 105–124 (YFIL…TANP), 152–172 (VSLA…GFSF), 174–194 (VMYL…WFFL), 219–239 (LLLF…IINM), 253–273 (LAGV…LIAG), 283–303 (LLMC…LLAH), 308–328 (LLGL…IGML), 344–364 (LYTN…GIAA), and 366–386 (IWNY…TMFC).

This sequence belongs to the major facilitator superfamily. Set transporter family.

Its subcellular location is the cell inner membrane. Functionally, involved in the efflux of sugars. The physiological role may be the detoxification of non-metabolizable sugar analogs. Can transport lactose and glucose. The protein is Sugar efflux transporter B (setB) of Salmonella typhimurium (strain LT2 / SGSC1412 / ATCC 700720).